Consider the following 457-residue polypeptide: Cystathionine beta-lyase, chloroplastic (457 aa).

The N-terminal 51 residues, 1 to 51, are a transit peptide targeting the chloroplast; that stretch reads MFSRPFVTPVTIDLQVKSITAGNMWEGLGFYKPANSKSNQMICSKGFRLNC. The pyridoxal 5'-phosphate site is built by tyrosine 120, arginine 122, glycine 150, methionine 151, serine 268, and threonine 270. An N6-(pyridoxal phosphate)lysine modification is found at lysine 271.

This sequence belongs to the trans-sulfuration enzymes family. Forms homodimers. May form homotetramers from two homodimers. Pyridoxal 5'-phosphate is required as a cofactor.

The protein resides in the plastid. It is found in the chloroplast. The enzyme catalyses L,L-cystathionine + H2O = L-homocysteine + pyruvate + NH4(+). It carries out the reaction an S-substituted L-cysteine + H2O = a thiol + pyruvate + NH4(+). In terms of biological role, catalyzes the degradation of cystathionine. The sequence is that of Cystathionine beta-lyase, chloroplastic from Mimosa pudica (Sensitive plant).